The chain runs to 334 residues: Putative 2-hydroxyacid dehydrogenase UNK4.10 (334 aa).

NAD(+)-binding positions include 166–167, 244–246, and D270; these read GI and TAR. R246 is a catalytic residue. Residue E275 is part of the active site. The Proton donor role is filled by H293. 293 to 296 provides a ligand contact to NAD(+); the sequence is HLGT.

This sequence belongs to the D-isomer specific 2-hydroxyacid dehydrogenase family.

In Schizosaccharomyces pombe (strain 972 / ATCC 24843) (Fission yeast), this protein is Putative 2-hydroxyacid dehydrogenase UNK4.10.